The sequence spans 67 residues: ATP synthase protein 8 (67 aa).

Residues 8-24 form a helical membrane-spanning segment; that stretch reads TWSITIMSMIMTLFIVF. Lys-54 is subject to N6-acetyllysine; alternate. Lys-54 bears the N6-succinyllysine; alternate mark. At Lys-57 the chain carries N6-acetyllysine.

Belongs to the ATPase protein 8 family. As to quaternary structure, F-type ATPases have 2 components, CF(1) - the catalytic core - and CF(0) - the membrane proton channel. Component of an ATP synthase complex composed of ATP5PB, ATP5MC1, ATP5F1E, ATP5PD, ATP5ME, ATP5PF, ATP5MF, MT-ATP6, MT-ATP8, ATP5F1A, ATP5F1B, ATP5F1D, ATP5F1C, ATP5PO, ATP5MG, ATP5MK and ATP5MJ. Interacts with PRICKLE3.

The protein resides in the mitochondrion membrane. Its function is as follows. Mitochondrial membrane ATP synthase (F(1)F(0) ATP synthase or Complex V) produces ATP from ADP in the presence of a proton gradient across the membrane which is generated by electron transport complexes of the respiratory chain. F-type ATPases consist of two structural domains, F(1) - containing the extramembraneous catalytic core and F(0) - containing the membrane proton channel, linked together by a central stalk and a peripheral stalk. During catalysis, ATP synthesis in the catalytic domain of F(1) is coupled via a rotary mechanism of the central stalk subunits to proton translocation. Part of the complex F(0) domain. Minor subunit located with subunit a in the membrane. The polypeptide is ATP synthase protein 8 (MT-ATP8) (Felis silvestris lybica (African wildcat)).